Consider the following 101-residue polypeptide: A-type ATP synthase subunit F (101 aa).

The protein belongs to the V-ATPase F subunit family. In terms of assembly, has multiple subunits, A(3), B(3), C, D, E, F, G, I and K(x); there may be a few other subunits as well.

It localises to the cell membrane. Component of the A-type ATP synthase that produces ATP from ADP in the presence of a proton gradient across the membrane. This is A-type ATP synthase subunit F from Methanosarcina mazei (strain ATCC BAA-159 / DSM 3647 / Goe1 / Go1 / JCM 11833 / OCM 88) (Methanosarcina frisia).